The following is a 590-amino-acid chain: Phosphatidylserine decarboxylase proenzyme 1, mitochondrial (590 aa).

The transit peptide at 1-59 (MPLKPISFRWSKTSVRSVPNPFMYGPDNLNKPLSRASQMAERVHQQTPSSTNYQQRRYF) directs the protein to the mitochondrion. Residues 60 to 140 (SYYYYQFPKI…GKERRRFIRW (81 aa)) are Mitochondrial matrix-facing. Residues 141–159 (WTVTSLTIVLGGVYAKIKY) traverse the membrane as a helical segment. Residues 160 to 590 (ERGDHEENPY…KVGQSLGGFV (431 aa)) are Mitochondrial intermembrane-facing. Residues Asp260, His403, and Ser558 each act as charge relay system; for autoendoproteolytic cleavage activity in the active site. The Schiff-base intermediate with substrate; via pyruvic acid; for decarboxylase activity role is filled by Ser558. Pyruvic acid (Ser); by autocatalysis is present on Ser558.

It belongs to the phosphatidylserine decarboxylase family. PSD-B subfamily. Eukaryotic type I sub-subfamily. Heterodimer of a large membrane-associated beta subunit and a small pyruvoyl-containing alpha subunit. Requires pyruvate as cofactor. Is synthesized initially as an inactive proenzyme. Formation of the active enzyme involves a self-maturation process in which the active site pyruvoyl group is generated from an internal serine residue via an autocatalytic post-translational modification. Two non-identical subunits are generated from the proenzyme in this reaction, and the pyruvate is formed at the N-terminus of the alpha chain, which is derived from the carboxyl end of the proenzyme. The autoendoproteolytic cleavage occurs by a canonical serine protease mechanism, in which the side chain hydroxyl group of the serine supplies its oxygen atom to form the C-terminus of the beta chain, while the remainder of the serine residue undergoes an oxidative deamination to produce ammonia and the pyruvoyl prosthetic group on the alpha chain. During this reaction, the Ser that is part of the protease active site of the proenzyme becomes the pyruvoyl prosthetic group, which constitutes an essential element of the active site of the mature decarboxylase.

The protein resides in the mitochondrion inner membrane. The catalysed reaction is a 1,2-diacyl-sn-glycero-3-phospho-L-serine + H(+) = a 1,2-diacyl-sn-glycero-3-phosphoethanolamine + CO2. It participates in phospholipid metabolism; phosphatidylethanolamine biosynthesis; phosphatidylethanolamine from CDP-diacylglycerol: step 2/2. Functionally, catalyzes the formation of phosphatidylethanolamine (PtdEtn) from phosphatidylserine (PtdSer). Plays a central role in phospholipid metabolism and in the interorganelle trafficking of phosphatidylserine. Important for virulence. The sequence is that of Phosphatidylserine decarboxylase proenzyme 1, mitochondrial from Candida albicans (strain SC5314 / ATCC MYA-2876) (Yeast).